Consider the following 949-residue polypeptide: Syndetin (949 aa).

The tract at residues 1 to 28 is disordered; the sequence is MQKIKSLMTRQGLRSPQESVHDLSPIEN. The segment covering 8-18 has biased composition (polar residues); the sequence is MTRQGLRSPQE. Coiled coils occupy residues 82–104 and 198–226; these read SLQE…LERV and YSCI…LSKI. The tract at residues 509-581 is disordered; it reads FEIQADSKDD…ETLRSRKKSD (73 aa). The span at 569-581 shows a compositional bias: basic and acidic residues; it reads VSRETLRSRKKSD.

Belongs to the syndetin family. Component of the endosome-associated retrograde protein (EARP) complex.

Its subcellular location is the recycling endosome. The protein localises to the membrane. Its function is as follows. Acts as a component of the EARP complex that is involved in endocytic recycling. The EARP complex associates with Rab4-positive endosomes and promotes recycling of internalized transferrin receptor (TFRC) to the plasma membrane. This Gallus gallus (Chicken) protein is Syndetin.